The primary structure comprises 87 residues: ParB-like nuclease domain-containing protein YnaK (87 aa).

The polypeptide is ParB-like nuclease domain-containing protein YnaK (ynaK) (Escherichia coli (strain K12)).